The sequence spans 247 residues: Protein At-4/1 (247 aa).

Coiled coils occupy residues 39 to 126 and 182 to 247; these read VESS…YKIR and LLME…LSSS.

Interacts with viral tomato spotted wilt virus (TSWV) movement protein NSM, which is involved in cell-to cell spread of viral genome and enlargement of the host plasmodesmata size exclusion limit (SEL). In terms of tissue distribution, expressed in leaves (at protein level).

Its subcellular location is the endoplasmic reticulum. The protein resides in the cell junction. The protein localises to the plasmodesma. In terms of biological role, involved in intra- and inter-cellular trafficking through plasmodesmata (PD). This is Protein At-4/1 from Arabidopsis thaliana (Mouse-ear cress).